Reading from the N-terminus, the 220-residue chain is Large ribosomal subunit protein uL3 (220 aa).

The tract at residues 130 to 156 is disordered; sequence AIKRHGQSRGPMSHGSHFHRAPGSVGM.

It belongs to the universal ribosomal protein uL3 family. Part of the 50S ribosomal subunit. Forms a cluster with proteins L14 and L19.

In terms of biological role, one of the primary rRNA binding proteins, it binds directly near the 3'-end of the 23S rRNA, where it nucleates assembly of the 50S subunit. The polypeptide is Large ribosomal subunit protein uL3 (Staphylococcus aureus (strain Mu3 / ATCC 700698)).